Consider the following 342-residue polypeptide: Galactose mutarotase (342 aa).

A Phosphoserine modification is found at Ser-14. Residues 81–82 (NR), His-107, 176–178 (HSY), Asp-243, Gln-279, and Glu-307 each bind beta-D-galactose. The Proton donor role is filled by His-176. Catalysis depends on Glu-307, which acts as the Proton acceptor.

It belongs to the aldose epimerase family. As to quaternary structure, monomer.

It is found in the cytoplasm. The enzyme catalyses alpha-D-galactose = beta-D-galactose. It carries out the reaction alpha-D-glucose = beta-D-glucose. Its pathway is carbohydrate metabolism; hexose metabolism. It functions in the pathway carbohydrate metabolism; galactose metabolism. In terms of biological role, mutarotase that catalyzes the interconversion of beta-D-galactose and alpha-D-galactose during galactose metabolism. Beta-D-galactose is metabolized in the liver into glucose 1-phosphate, the primary metabolic fuel, by the action of four enzymes that constitute the Leloir pathway: GALM, GALK1 (galactokinase), GALT (galactose-1-phosphate uridylyltransferase) and GALE (UDP-galactose-4'-epimerase). Involved in the maintenance of the equilibrium between the beta- and alpha-anomers of galactose, therefore ensuring a sufficient supply of the alpha-anomer for GALK1. Also active on D-glucose although shows a preference for galactose over glucose. The sequence is that of Galactose mutarotase from Mus musculus (Mouse).